Consider the following 528-residue polypeptide: Xylose import ATP-binding protein XylG (528 aa).

2 consecutive ABC transporter domains span residues 6–245 (LQMN…VGRE) and 262–507 (FEAR…LSHP). Residue 38–45 (GENGAGKS) coordinates ATP. A disordered region spans residues 504-528 (LSHPGDPDSNDPANNNHNDNDRKTT).

It belongs to the ABC transporter superfamily. Xylose importer (TC 3.A.1.2.4) family. As to quaternary structure, the complex is composed of two ATP-binding proteins (XylG), two transmembrane proteins (XylH) and a solute-binding protein (XylF).

It localises to the cell inner membrane. It carries out the reaction D-xylose(out) + ATP + H2O = D-xylose(in) + ADP + phosphate + H(+). Its function is as follows. Part of the ABC transporter complex XylFGH involved in xylose import. Responsible for energy coupling to the transport system. The protein is Xylose import ATP-binding protein XylG of Pseudomonas syringae pv. tomato (strain ATCC BAA-871 / DC3000).